The chain runs to 156 residues: Small ribosomal subunit protein uS7 (156 aa).

Belongs to the universal ribosomal protein uS7 family. In terms of assembly, part of the 30S ribosomal subunit. Contacts proteins S9 and S11.

One of the primary rRNA binding proteins, it binds directly to 16S rRNA where it nucleates assembly of the head domain of the 30S subunit. Is located at the subunit interface close to the decoding center, probably blocks exit of the E-site tRNA. The polypeptide is Small ribosomal subunit protein uS7 (Streptococcus equi subsp. equi (strain 4047)).